A 330-amino-acid chain; its full sequence is Acrylyl-CoA reductase AcuI (330 aa).

NADP(+) is bound by residues tyrosine 44, 159 to 162, 181 to 183, arginine 201, leucine 247, and serine 272; these read AGGV and TGR.

It belongs to the zinc-containing alcohol dehydrogenase family. Acrylyl-CoA reductase subfamily. Homodimer.

It localises to the cytoplasm. It catalyses the reaction propanoyl-CoA + NADP(+) = acryloyl-CoA + NADPH + H(+). Probably catalyzes the NADPH-dependent reduction of acrylyl-CoA to propanoyl-CoA. Restores acrylate resistance when expressed in an E.coli strain K12 acuI deletion. The polypeptide is Acrylyl-CoA reductase AcuI (acuI) (Ruegeria pomeroyi (strain ATCC 700808 / DSM 15171 / DSS-3) (Silicibacter pomeroyi)).